A 366-amino-acid chain; its full sequence is tRNA/tmRNA (uracil-C(5))-methyltransferase (366 aa).

S-adenosyl-L-methionine contacts are provided by Q188, Y216, N221, E237, and D297. The Nucleophile role is filled by C322. E356 (proton acceptor) is an active-site residue.

It belongs to the class I-like SAM-binding methyltransferase superfamily. RNA M5U methyltransferase family. TrmA subfamily.

The catalysed reaction is uridine(54) in tRNA + S-adenosyl-L-methionine = 5-methyluridine(54) in tRNA + S-adenosyl-L-homocysteine + H(+). It carries out the reaction uridine(341) in tmRNA + S-adenosyl-L-methionine = 5-methyluridine(341) in tmRNA + S-adenosyl-L-homocysteine + H(+). Dual-specificity methyltransferase that catalyzes the formation of 5-methyluridine at position 54 (m5U54) in all tRNAs, and that of position 341 (m5U341) in tmRNA (transfer-mRNA). The chain is tRNA/tmRNA (uracil-C(5))-methyltransferase from Histophilus somni (strain 129Pt) (Haemophilus somnus).